The following is a 1111-amino-acid chain: RecBCD enzyme subunit RecC (1111 aa).

Belongs to the RecC family. Heterotrimer of RecB, RecC and RecD. All subunits contribute to DNA-binding.

In terms of biological role, a helicase/nuclease that prepares dsDNA breaks (DSB) for recombinational DNA repair. Binds to DSBs and unwinds DNA via a highly rapid and processive ATP-dependent bidirectional helicase activity. Unwinds dsDNA until it encounters a Chi (crossover hotspot instigator) sequence from the 3' direction. Cuts ssDNA a few nucleotides 3' to the Chi site. The properties and activities of the enzyme are changed at Chi. The Chi-altered holoenzyme produces a long 3'-ssDNA overhang and facilitates RecA-binding to the ssDNA for homologous DNA recombination and repair. Holoenzyme degrades any linearized DNA that is unable to undergo homologous recombination. In the holoenzyme this subunit recognizes the wild-type Chi sequence, and when added to isolated RecB increases its ATP-dependent helicase processivity. This is RecBCD enzyme subunit RecC from Buchnera aphidicola subsp. Baizongia pistaciae (strain Bp).